A 138-amino-acid chain; its full sequence is uncharacterized protein (138 aa).

A disordered region spans residues 1-27; the sequence is MEGELIENNGLDIYDTSETPKKRGRPA.

This is an uncharacterized protein from Escherichia coli (strain K12).